We begin with the raw amino-acid sequence, 559 residues long: Dihydroxy-acid dehydratase (559 aa).

Cys-49 provides a ligand contact to [2Fe-2S] cluster. Residue Asp-81 coordinates Mg(2+). Position 122 (Cys-122) interacts with [2Fe-2S] cluster. 2 residues coordinate Mg(2+): Asp-123 and Lys-124. N6-carboxylysine is present on Lys-124. A [2Fe-2S] cluster-binding site is contributed by Cys-194. Glu-446 is a Mg(2+) binding site. The active-site Proton acceptor is Ser-472.

The protein belongs to the IlvD/Edd family. In terms of assembly, homodimer. Requires [2Fe-2S] cluster as cofactor. Mg(2+) is required as a cofactor.

The catalysed reaction is (2R)-2,3-dihydroxy-3-methylbutanoate = 3-methyl-2-oxobutanoate + H2O. It catalyses the reaction (2R,3R)-2,3-dihydroxy-3-methylpentanoate = (S)-3-methyl-2-oxopentanoate + H2O. The protein operates within amino-acid biosynthesis; L-isoleucine biosynthesis; L-isoleucine from 2-oxobutanoate: step 3/4. It functions in the pathway amino-acid biosynthesis; L-valine biosynthesis; L-valine from pyruvate: step 3/4. In terms of biological role, functions in the biosynthesis of branched-chain amino acids. Catalyzes the dehydration of (2R,3R)-2,3-dihydroxy-3-methylpentanoate (2,3-dihydroxy-3-methylvalerate) into 2-oxo-3-methylpentanoate (2-oxo-3-methylvalerate) and of (2R)-2,3-dihydroxy-3-methylbutanoate (2,3-dihydroxyisovalerate) into 2-oxo-3-methylbutanoate (2-oxoisovalerate), the penultimate precursor to L-isoleucine and L-valine, respectively. The protein is Dihydroxy-acid dehydratase of Prochlorococcus marinus (strain MIT 9515).